A 381-amino-acid polypeptide reads, in one-letter code: Neuropeptide Y receptor type 2 (381 aa).

Positions 1–35 are disordered; the sequence is MGPIGAEADENQTVEEMKVEQYGPQTTPRGELVPD. At 1 to 51 the chain is on the extracellular side; the sequence is MGPIGAEADENQTVEEMKVEQYGPQTTPRGELVPDPEPELIDSTKLIEVQV. A glycan (N-linked (GlcNAc...) asparagine) is linked at Asn-11. The helical transmembrane segment at 52-72 threads the bilayer; that stretch reads VLILAYCSIILLGVIGNSLVI. The Cytoplasmic portion of the chain corresponds to 73-86; the sequence is HVVIKFKSMRTVTN. A helical membrane pass occupies residues 87–107; the sequence is FFIANLAVADLLVNTLCLPFT. Topologically, residues 108 to 124 are extracellular; sequence LTYTLMGEWKMGPVLCH. An intrachain disulfide couples Cys-123 to Cys-203. Residues 125-145 form a helical membrane-spanning segment; it reads LVPYAQGLAVQVSTITLTVIA. Over 146 to 165 the chain is Cytoplasmic; the sequence is LDRHRCIVYHLESKISKRIS. A helical transmembrane segment spans residues 166 to 186; that stretch reads FLIIGLAWGISALLASPLAIF. Over 187–216 the chain is Extracellular; the sequence is REYSLIEIIPDFEIVACTEKWPGEEKSIYG. The chain crosses the membrane as a helical span at residues 217-237; that stretch reads TVYSLSSLLILYVLPLGIISF. At 238–268 the chain is on the cytoplasmic side; it reads SYTRIWSKLKNHVSPGAANDHYHQRRQKTTK. The helical transmembrane segment at 269–289 threads the bilayer; sequence MLVCVVVVFAVSWLPLHAFQL. Topologically, residues 290–304 are extracellular; the sequence is AVDIDSQVLDLKEYK. Residues 305 to 325 traverse the membrane as a helical segment; that stretch reads LIFTVFHIIAMCSTFANPLLY. Over 326-381 the chain is Cytoplasmic; sequence GWMNSNYRKAFLSAFRCEQRLDAIHSEVSVTFKAKKNLEVRKNSGPNDSFTEATNV. Cys-342 is lipidated: S-palmitoyl cysteine.

This sequence belongs to the G-protein coupled receptor 1 family. High levels in amygdala, corpus callosum, hippocampus and subthalamic nucleus. Also detectable in caudate nucleus, hypothalamus and substantia nigra.

Its subcellular location is the cell membrane. In terms of biological role, receptor for neuropeptide Y and peptide YY. The rank order of affinity of this receptor for pancreatic polypeptides is PYY &gt; NPY &gt; PYY (3-36) &gt; NPY (2-36) &gt; [Ile-31, Gln-34] PP &gt; [Leu-31, Pro-34] NPY &gt; PP, [Pro-34] PYY and NPY free acid. The sequence is that of Neuropeptide Y receptor type 2 (NPY2R) from Homo sapiens (Human).